The chain runs to 552 residues: Cycloheximide resistance protein (552 aa).

The tract at residues Val-46 to Gln-70 is disordered. Residues Leu-47 to Ser-56 are compositionally biased toward polar residues. The next 12 helical transmembrane spans lie at Ala-100–Tyr-120, Leu-137–Ser-157, Thr-168–Ser-188, Leu-194–Gly-213, Tyr-225–Ile-246, Trp-262–Leu-282, Ile-346–Val-362, Tyr-381–Val-399, Leu-419–Thr-439, Asn-445–Phe-464, Val-477–Ser-494, and Trp-518–Leu-539.

It belongs to the major facilitator superfamily. CAR1 family.

Its subcellular location is the membrane. Functionally, probable transporter. Confers resistance to cycloheximide. The polypeptide is Cycloheximide resistance protein (CYHR) (Candida maltosa (Yeast)).